Consider the following 323-residue polypeptide: Octaprenyl diphosphate synthase (323 aa).

Isopentenyl diphosphate is bound by residues lysine 45, arginine 48, and histidine 77. Mg(2+) contacts are provided by aspartate 84 and aspartate 88. Arginine 93 contacts an all-trans-polyprenyl diphosphate. Arginine 94 provides a ligand contact to isopentenyl diphosphate. An all-trans-polyprenyl diphosphate contacts are provided by lysine 170, threonine 171, and glutamine 208.

Belongs to the FPP/GGPP synthase family. Mg(2+) is required as a cofactor.

The enzyme catalyses 5 isopentenyl diphosphate + (2E,6E)-farnesyl diphosphate = all-trans-octaprenyl diphosphate + 5 diphosphate. In terms of biological role, supplies octaprenyl diphosphate, the precursor for the side chain of the isoprenoid quinones ubiquinone and menaquinone. This Escherichia coli (strain K12) protein is Octaprenyl diphosphate synthase (ispB).